The chain runs to 127 residues: Modulator protein MzrA (127 aa).

Residues 1 to 10 (MVISPLALRR) lie on the Cytoplasmic side of the membrane. A helical membrane pass occupies residues 11–31 (LSYGLIALVLLSALILVWTAL). Topologically, residues 32-127 (QRQESTLAIR…RLRDTSHRFG (96 aa)) are periplasmic.

This sequence belongs to the MzrA family. As to quaternary structure, interacts with EnvZ.

It is found in the cell inner membrane. Its function is as follows. Modulates the activity of the EnvZ/OmpR two-component regulatory system, probably by directly modulating EnvZ enzymatic activity and increasing stability of phosphorylated OmpR. This is Modulator protein MzrA from Enterobacter sp. (strain 638).